The following is a 426-amino-acid chain: PHD finger-containing protein 6 (426 aa).

The PHD-type zinc finger occupies 9–59 (RSICETCGHQGWKNSLVTCSKCRIACEHCYCMRESSFETSIHFVCADCSMR). Zn(2+) is bound by residues Cys12, Cys15, Cys27, Cys30, His36, Cys39, Cys53, and Cys56. Disordered regions lie at residues 122-144 (TFRVPRPVSARPPMGLTKPTAGF) and 185-205 (RQASKAQAVGEGSKSKVGDGA).

Interacts directly with AIPP3/BDT1.

Its function is as follows. Together with AIPP3/BDT1, cooperates to form a BAH-PHD bivalent histone reader complex able to read histone H3 lysine 27 trimethylation (H3K27me3) histone marks in order to regulate transcription, especially to prevent early flowering; promotes AIPP3/BDT1 binding to H3K27me3. This chain is PHD finger-containing protein 6, found in Arabidopsis thaliana (Mouse-ear cress).